The chain runs to 378 residues: Anhydro-N-acetylmuramic acid kinase (378 aa).

23 to 30 (GTSMDGAD) serves as a coordination point for ATP.

The protein belongs to the anhydro-N-acetylmuramic acid kinase family.

The enzyme catalyses 1,6-anhydro-N-acetyl-beta-muramate + ATP + H2O = N-acetyl-D-muramate 6-phosphate + ADP + H(+). Its pathway is amino-sugar metabolism; 1,6-anhydro-N-acetylmuramate degradation. It functions in the pathway cell wall biogenesis; peptidoglycan recycling. Functionally, catalyzes the specific phosphorylation of 1,6-anhydro-N-acetylmuramic acid (anhMurNAc) with the simultaneous cleavage of the 1,6-anhydro ring, generating MurNAc-6-P. Is required for the utilization of anhMurNAc either imported from the medium or derived from its own cell wall murein, and thus plays a role in cell wall recycling. In Bordetella pertussis (strain Tohama I / ATCC BAA-589 / NCTC 13251), this protein is Anhydro-N-acetylmuramic acid kinase.